Reading from the N-terminus, the 596-residue chain is Beta-fructofuranosidase, insoluble isoenzyme 7 (596 aa).

The first 24 residues, 1 to 24, serve as a signal peptide directing secretion; it reads MARLGLAVCAASFHLFLLLASTSS. Residues 51–54, Q70, and W78 contribute to the substrate site; that span reads WQND. D54 is an active-site residue. The N-linked (GlcNAc...) asparagine glycan is linked to N82. Substrate-binding positions include 115–116, 179–180, and E234; these read WS and RD. The N-linked (GlcNAc...) asparagine glycan is linked to N330. A disulfide bridge connects residues C432 and C478. Residue N552 is glycosylated (N-linked (GlcNAc...) asparagine).

This sequence belongs to the glycosyl hydrolase 32 family.

The protein resides in the secreted. The protein localises to the extracellular space. Its subcellular location is the apoplast. It localises to the cell wall. It carries out the reaction Hydrolysis of terminal non-reducing beta-D-fructofuranoside residues in beta-D-fructofuranosides.. May play a role in sucrose partitioning during seed development. This Oryza sativa subsp. indica (Rice) protein is Beta-fructofuranosidase, insoluble isoenzyme 7 (CIN7).